A 231-amino-acid chain; its full sequence is Proteasome subunit alpha type-2 (231 aa).

The protein belongs to the peptidase T1A family. As to quaternary structure, the 26S proteasome consists of a 20S proteasome core and two 19S regulatory subunits. The 20S proteasome core is composed of 28 subunits that are arranged in four stacked rings, resulting in a barrel-shaped structure. The two end rings are each formed by seven alpha subunits, and the two central rings are each formed by seven beta subunits. The catalytic chamber with the active sites is on the inside of the barrel.

Its subcellular location is the cytoplasm. The protein resides in the nucleus. The proteasome is a multicatalytic proteinase complex which is characterized by its ability to cleave peptides with Arg, Phe, Tyr, Leu, and Glu adjacent to the leaving group at neutral or slightly basic pH. The proteasome has an ATP-dependent proteolytic activity. The polypeptide is Proteasome subunit alpha type-2 (pas-2) (Caenorhabditis elegans).